The following is a 1468-amino-acid chain: DNA-directed RNA polymerase subunit beta (1468 aa).

Belongs to the RNA polymerase beta chain family. In terms of assembly, the RNAP catalytic core consists of 2 alpha, 1 beta, 1 beta' and 1 omega subunit. When a sigma factor is associated with the core the holoenzyme is formed, which can initiate transcription.

It catalyses the reaction RNA(n) + a ribonucleoside 5'-triphosphate = RNA(n+1) + diphosphate. In terms of biological role, DNA-dependent RNA polymerase catalyzes the transcription of DNA into RNA using the four ribonucleoside triphosphates as substrates. This is DNA-directed RNA polymerase subunit beta from Aquifex aeolicus (strain VF5).